Here is a 496-residue protein sequence, read N- to C-terminus: GTPase Der (496 aa).

EngA-type G domains follow at residues 3–168 and 210–383; these read PIIA…VPEK and IKLA…DCST. GTP contacts are provided by residues 9-16, 56-60, 120-123, 216-223, 263-267, and 328-331; these read GRPNVGKS, DTGGI, NKID, DTAGV, and NKWD. In terms of domain architecture, KH-like spans 384–468; that stretch reads KRINTSLLTR…PIRIQFKESE (85 aa).

The protein belongs to the TRAFAC class TrmE-Era-EngA-EngB-Septin-like GTPase superfamily. EngA (Der) GTPase family. Associates with the 50S ribosomal subunit.

Its function is as follows. GTPase that plays an essential role in the late steps of ribosome biogenesis. This chain is GTPase Der, found in Hamiltonella defensa subsp. Acyrthosiphon pisum (strain 5AT).